The following is a 369-amino-acid chain: Molybdenum import ATP-binding protein ModC (369 aa).

Residues 7 to 243 (PGQAGIHARF…LDLPMAMTDD (237 aa)) enclose the ABC transporter domain. 41-48 (GQSGSGKT) lines the ATP pocket. The Mop domain occupies 304 to 369 (EGSILNVLAV…AQIKAVSLLA (66 aa)).

The protein belongs to the ABC transporter superfamily. Molybdate importer (TC 3.A.1.8) family. The complex is composed of two ATP-binding proteins (ModC), two transmembrane proteins (ModB) and a solute-binding protein (ModA).

It is found in the cell inner membrane. The enzyme catalyses molybdate(out) + ATP + H2O = molybdate(in) + ADP + phosphate + H(+). Its function is as follows. Part of the ABC transporter complex ModABC involved in molybdenum import. Responsible for energy coupling to the transport system. The protein is Molybdenum import ATP-binding protein ModC of Bordetella pertussis (strain Tohama I / ATCC BAA-589 / NCTC 13251).